The chain runs to 1071 residues: ATP-dependent helicase/deoxyribonuclease subunit B (1071 aa).

The protein belongs to the helicase family. AddB/RexB type 2 subfamily. As to quaternary structure, heterodimer of AddA and RexB. Mg(2+) is required as a cofactor.

In terms of biological role, the heterodimer acts as both an ATP-dependent DNA helicase and an ATP-dependent, dual-direction single-stranded exonuclease. Recognizes the chi site generating a DNA molecule suitable for the initiation of homologous recombination. This subunit has 5' -&gt; 3' nuclease activity but not helicase activity. This Streptococcus pyogenes serotype M6 (strain ATCC BAA-946 / MGAS10394) protein is ATP-dependent helicase/deoxyribonuclease subunit B.